The sequence spans 411 residues: Secretion apparatus protein BsaZ (411 aa).

4 helical membrane passes run 28–48 (IVAL…VDLT), 80–100 (IAAP…LVQS), 137–157 (ALLY…LYHA), and 175–195 (IVLT…VLIL). The interval 341–411 (AANRGGPPPE…APARTGDQNA (71 aa)) is disordered. Residues 370–404 (DACADNAFPDDAPPGAAAPNAGSPDGPAPDGGAPA) are compositionally biased toward low complexity.

This sequence belongs to the type III secretion exporter family.

The protein localises to the cell membrane. Part of the bsa type III secretion system, is involved in the intracellular replication of invading bacteria inside the host cell. Probably necessary for the lysis of the vacuole membrane and escape into the host cell cytoplasm. This is Secretion apparatus protein BsaZ (bsaZ) from Burkholderia pseudomallei (strain 1710b).